Consider the following 473-residue polypeptide: PTS system trehalose-specific EIIBC component (473 aa).

The PTS EIIB type-1 domain occupies 1–89 (MMSKINQTDI…IASTGQAQVD (89 aa)). Over 1 to 110 (MMSKINQTDI…MKWHEQLISH (110 aa)) the chain is Cytoplasmic. Residue Cys29 is the Phosphocysteine intermediate; for EIIB activity of the active site. Cys29 carries the phosphocysteine; by EIIA modification. Positions 109-473 (SHFAVIFFPL…KYRLGTLDIV (365 aa)) constitute a PTS EIIC type-1 domain. A helical transmembrane segment spans residues 111 to 131 (FAVIFFPLLPALISGGLILGF). Residues 132–158 (RNVIGDLPMSNGQTLAQMYPSLQTIYD) are Periplasmic-facing. The helical transmembrane segment at 159–179 (FLWLIGEAIFFYLPVGICWSA) threads the bilayer. Over 180-187 (VKKMGGTP) the chain is Cytoplasmic. Residues 188–208 (ILGIVLGVTLVSPQLMNAYLL) form a helical membrane-spanning segment. Residues 209–225 (GQQLPEVWDFGMFSIAK) lie on the Periplasmic side of the membrane. The helical transmembrane segment at 226 to 246 (VGYQAQVIPALLAGLALGVIE) threads the bilayer. Residues 247–258 (TRLKRIVPDYLY) are Cytoplasmic-facing. Residues 259–279 (LVVVPVCSLILAVFLAHALIG) traverse the membrane as a helical segment. The Periplasmic portion of the chain corresponds to 280–300 (PFGRMIGDGVAFAVRHLMTGS). A helical transmembrane segment spans residues 301 to 321 (FAPIGAALFGFLYAPLVITGV). At 322 to 340 (HQTTLAIDLQMIQSMGGTP) the chain is on the cytoplasmic side. The helical transmembrane segment at 341–361 (VWPLIALSNIAQGSAVIGIII) threads the bilayer. Residues 362 to 370 (SSRKHNERE) are Periplasmic-facing. Residues 371–391 (ISVPAAISAWLGVTEPAMYGI) form a helical membrane-spanning segment. At 392-398 (NLKYRFP) the chain is on the cytoplasmic side. Residues 399–419 (MLCAMIGSGLAGLLCGLNGVM) traverse the membrane as a helical segment. Topologically, residues 420–440 (ANGIGVGGLPGILSIQPSYWQ) are periplasmic. A helical membrane pass occupies residues 441–461 (VFALAMAIAIIIPIVLTSFIY). Residues 462-473 (QRKYRLGTLDIV) are Cytoplasmic-facing.

The protein localises to the cell inner membrane. The catalysed reaction is alpha,alpha-trehalose(out) + N(pros)-phospho-L-histidyl-[protein] = alpha,alpha-trehalose 6-phosphate(in) + L-histidyl-[protein]. Its function is as follows. The phosphoenolpyruvate-dependent sugar phosphotransferase system (sugar PTS), a major carbohydrate active transport system, catalyzes the phosphorylation of incoming sugar substrates concomitantly with their translocation across the cell membrane. This system is involved in trehalose transport at low osmolarity. The sequence is that of PTS system trehalose-specific EIIBC component (treB) from Escherichia coli (strain K12).